The sequence spans 738 residues: Protein ALEX (738 aa).

Disordered regions lie at residues 1–105 (MSPS…EEAM), 155–188 (REDY…ASHA), 237–350 (TTFP…LPKP), 387–516 (MSGQ…LGQP), 528–578 (GEPG…LDPP), and 611–689 (GMRL…RPRI). Residues 257–273 (GSTTTPLSIWTAPQSQV) show a composition bias toward polar residues. Basic and acidic residues predominate over residues 279-301 (KSREPQLRASTQRDPHLSDKQPR). Residues 387–396 (MSGQNQTEGQ) are compositionally biased toward polar residues. Pro residues-rich tracts occupy residues 410 to 438 (QPPP…PPSQ), 448 to 467 (PSLP…PRQP), and 476 to 485 (PGQPPSPLRS). Composition is skewed to low complexity over residues 542 to 564 (PSLP…LPAG), 615 to 626 (RPASARSSPPAM), and 656 to 671 (ATRS…EAAS).

Belongs to the ALEX family. As to quaternary structure, interacts with the N-terminal region of the XLas isoforms of guanine nucleotide-binding protein G(s) subunit alpha.

The protein localises to the cell membrane. It is found in the cell projection. It localises to the ruffle. Its function is as follows. May inhibit the adenylyl cyclase-stimulating activity of guanine nucleotide-binding protein G(s) subunit alpha which is produced from the same locus in a different open reading frame. The sequence is that of Protein ALEX from Rattus norvegicus (Rat).